A 201-amino-acid chain; its full sequence is Peptide deformylase (201 aa).

A disordered region spans residues 1-21 (MANHFSQLAKKSRTNGNAEKI). Fe cation-binding residues include Cys-121 and His-163. Glu-164 is a catalytic residue. His-167 provides a ligand contact to Fe cation.

Belongs to the polypeptide deformylase family. Fe(2+) serves as cofactor.

The catalysed reaction is N-terminal N-formyl-L-methionyl-[peptide] + H2O = N-terminal L-methionyl-[peptide] + formate. Its function is as follows. Removes the formyl group from the N-terminal Met of newly synthesized proteins. Requires at least a dipeptide for an efficient rate of reaction. N-terminal L-methionine is a prerequisite for activity but the enzyme has broad specificity at other positions. The polypeptide is Peptide deformylase (Prochlorococcus marinus (strain AS9601)).